The primary structure comprises 306 residues: D-alanine--D-alanine ligase (306 aa).

Residues 101–303 (KQVWQAVGLP…FSQLVVKILE (203 aa)) form the ATP-grasp domain. Residue 134-189 (FTHLGLPLIVKPSREGSSVGMSKVNTLSDLPAALEEAFRHDDDVLVEKWLSGPEYT) participates in ATP binding. The Mg(2+) site is built by Asp-257, Glu-270, and Asn-272.

This sequence belongs to the D-alanine--D-alanine ligase family. The cofactor is Mg(2+). Mn(2+) is required as a cofactor.

The protein resides in the cytoplasm. The enzyme catalyses 2 D-alanine + ATP = D-alanyl-D-alanine + ADP + phosphate + H(+). It participates in cell wall biogenesis; peptidoglycan biosynthesis. Functionally, cell wall formation. The sequence is that of D-alanine--D-alanine ligase from Pectobacterium atrosepticum (strain SCRI 1043 / ATCC BAA-672) (Erwinia carotovora subsp. atroseptica).